The primary structure comprises 125 residues: Holo-[acyl-carrier-protein] synthase (125 aa).

The Mg(2+) site is built by Asp-8 and Glu-56.

It belongs to the P-Pant transferase superfamily. AcpS family. Requires Mg(2+) as cofactor.

Its subcellular location is the cytoplasm. The enzyme catalyses apo-[ACP] + CoA = holo-[ACP] + adenosine 3',5'-bisphosphate + H(+). Its function is as follows. Transfers the 4'-phosphopantetheine moiety from coenzyme A to a Ser of acyl-carrier-protein. This Borrelia turicatae (strain 91E135) protein is Holo-[acyl-carrier-protein] synthase.